The primary structure comprises 283 residues: Putative sugar uptake protein BC_0219 (283 aa).

Helical transmembrane passes span 4–21 (LLAL…LVSV), 26–48 (GAYS…MYVF), 52–71 (ALTM…WALG), 84–106 (VSTT…GVIA), 110–132 (WTTT…GVVF), 151–173 (LLTL…WYNI), 178–195 (AILP…VLTS), 208–230 (ALSG…RVGV), 234–253 (FPLS…VFLG), and 260–279 (QLIF…VLLG).

The protein belongs to the GRP transporter (TC 2.A.7.5) family.

It is found in the cell membrane. The polypeptide is Putative sugar uptake protein BC_0219 (Bacillus cereus (strain ATCC 14579 / DSM 31 / CCUG 7414 / JCM 2152 / NBRC 15305 / NCIMB 9373 / NCTC 2599 / NRRL B-3711)).